We begin with the raw amino-acid sequence, 438 residues long: Serine carboxypeptidase-like 5 (438 aa).

An N-terminal signal peptide occupies residues 1-28 (MANYISSVLKSLLLLLHLVFLIQQHVDS). Cystine bridges form between C87–C328, C251–C263, and C287–C294. N-linked (GlcNAc...) asparagine glycosylation is present at N108. The active site involves S183. N347 carries N-linked (GlcNAc...) asparagine glycosylation. The active site involves D363. A glycan (N-linked (GlcNAc...) asparagine) is linked at N379. H416 is an active-site residue.

The protein belongs to the peptidase S10 family. As to expression, expressed in seedlings, roots, and siliques.

It localises to the secreted. Functionally, probable carboxypeptidase. This is Serine carboxypeptidase-like 5 (SCPL5) from Arabidopsis thaliana (Mouse-ear cress).